A 362-amino-acid chain; its full sequence is 3-dehydroquinate synthase (362 aa).

Residues 70-75 (DGESYK), 104-108 (GVVGD), 128-129 (TT), Lys141, and Lys150 contribute to the NAD(+) site. Zn(2+)-binding residues include Glu183, His246, and His263.

Belongs to the sugar phosphate cyclases superfamily. Dehydroquinate synthase family. Requires Co(2+) as cofactor. Zn(2+) is required as a cofactor. It depends on NAD(+) as a cofactor.

The protein resides in the cytoplasm. It catalyses the reaction 7-phospho-2-dehydro-3-deoxy-D-arabino-heptonate = 3-dehydroquinate + phosphate. The protein operates within metabolic intermediate biosynthesis; chorismate biosynthesis; chorismate from D-erythrose 4-phosphate and phosphoenolpyruvate: step 2/7. In terms of biological role, catalyzes the conversion of 3-deoxy-D-arabino-heptulosonate 7-phosphate (DAHP) to dehydroquinate (DHQ). The chain is 3-dehydroquinate synthase from Saccharophagus degradans (strain 2-40 / ATCC 43961 / DSM 17024).